A 293-amino-acid chain; its full sequence is Methoxy mycolic acid synthase MmaA3 (293 aa).

S-adenosyl-L-methionine-binding positions include 39 to 40 (YS), 78 to 80 (GCG), 100 to 105 (TLSKNQ), 129 to 130 (WA), and Ile-142. The active site involves Cys-275.

Belongs to the CFA/CMAS family.

It functions in the pathway lipid metabolism; mycolic acid biosynthesis. In terms of biological role, involved in the biosynthesis of methoxymycolic acid. It catalyzes the O-methylation of the hydroxy group of the hydroxymycolate to form a methyl ether. This is Methoxy mycolic acid synthase MmaA3 (cmaB) from Mycobacterium bovis (strain ATCC BAA-935 / AF2122/97).